The sequence spans 308 residues: uncharacterized protein (308 aa).

5 helical membrane passes run 46–66 (GISA…GVLQ), 82–102 (LLAA…LLWM), 159–179 (AAIG…FLIF), 190–210 (FFQV…IGVL), and 271–291 (LYLF…SLYF).

It belongs to the oxidase-dependent Fe transporter (OFeT) (TC 9.A.10.1) family.

Its subcellular location is the cell membrane. This is an uncharacterized protein from Synechocystis sp. (strain ATCC 27184 / PCC 6803 / Kazusa).